A 173-amino-acid polypeptide reads, in one-letter code: Cytidylate kinase (173 aa).

7–15 is an ATP binding site; it reads GLAGTGTST.

This sequence belongs to the cytidylate kinase family. Type 2 subfamily.

Its subcellular location is the cytoplasm. It catalyses the reaction CMP + ATP = CDP + ADP. The enzyme catalyses dCMP + ATP = dCDP + ADP. The sequence is that of Cytidylate kinase from Methanosphaera stadtmanae (strain ATCC 43021 / DSM 3091 / JCM 11832 / MCB-3).